The sequence spans 128 residues: Large ribosomal subunit protein bL17 (128 aa).

It belongs to the bacterial ribosomal protein bL17 family. As to quaternary structure, part of the 50S ribosomal subunit. Contacts protein L32.

The polypeptide is Large ribosomal subunit protein bL17 (Streptococcus suis (strain 98HAH33)).